The chain runs to 321 residues: 37 kDa cell surface protein (321 aa).

The protein localises to the secreted. It is found in the cell wall. This Candida albicans (Yeast) protein is 37 kDa cell surface protein (CSP37).